Consider the following 200-residue polypeptide: Dephospho-CoA kinase (200 aa).

Positions 3–200 constitute a DPCK domain; it reads RIGLTGGIGS…LIAEILTRIK (198 aa). 11 to 16 lines the ATP pocket; it reads GSGKST.

The protein belongs to the CoaE family.

It localises to the cytoplasm. It carries out the reaction 3'-dephospho-CoA + ATP = ADP + CoA + H(+). It functions in the pathway cofactor biosynthesis; coenzyme A biosynthesis; CoA from (R)-pantothenate: step 5/5. Its function is as follows. Catalyzes the phosphorylation of the 3'-hydroxyl group of dephosphocoenzyme A to form coenzyme A. This Corynebacterium efficiens (strain DSM 44549 / YS-314 / AJ 12310 / JCM 11189 / NBRC 100395) protein is Dephospho-CoA kinase.